Here is a 194-residue protein sequence, read N- to C-terminus: Large ribosomal subunit protein bL25 (194 aa).

It belongs to the bacterial ribosomal protein bL25 family. CTC subfamily. In terms of assembly, part of the 50S ribosomal subunit; part of the 5S rRNA/L5/L18/L25 subcomplex. Contacts the 5S rRNA. Binds to the 5S rRNA independently of L5 and L18.

This is one of the proteins that binds to the 5S RNA in the ribosome where it forms part of the central protuberance. The polypeptide is Large ribosomal subunit protein bL25 (Geobacter sulfurreducens (strain ATCC 51573 / DSM 12127 / PCA)).